A 297-amino-acid polypeptide reads, in one-letter code: uncharacterized protein (297 aa).

The 60-residue stretch at 1–60 folds into the HTH lysR-type domain; it reads MNIELRHLRYFVAVAEELHFGRAAARLNISQPPLSQQIQALEQQIGARLLARTNRSVLLT. The segment at residues 20 to 40 is a DNA-binding region (H-T-H motif); sequence FGRAAARLNISQPPLSQQIQA.

This sequence belongs to the LysR transcriptional regulatory family.

This is an uncharacterized protein from Escherichia coli (strain K12).